A 660-amino-acid chain; its full sequence is Pentatricopeptide repeat-containing protein At4g20090 (660 aa).

PPR repeat units follow at residues 76-110, 111-141, 147-181, 186-220, 221-255, 256-290, 291-325, 326-360, 361-395, 396-430, 431-465, 466-500, 501-535, 539-573, and 574-609; these read GDST…NRVI, IERS…MVDE, SVKS…NMNM, NGLS…KCLP, DGYT…GCSP, SPVI…GCVP, NEVT…KCIP, NDVT…GYHL, NQHI…GCKP, NIVV…GCLP, NAYT…GCSR, NKFC…GIKP, DTVA…EEPK, DVVT…GCDP, and DVIT…LLKR.

Belongs to the PPR family. P subfamily.

In terms of biological role, may play a role in embryogenesis. The protein is Pentatricopeptide repeat-containing protein At4g20090 (EMB1025) of Arabidopsis thaliana (Mouse-ear cress).